A 509-amino-acid chain; its full sequence is L-aspartate semialdehyde sulfurtransferase (509 aa).

Cys133 acts as the Cysteine persulfide intermediate in catalysis. 2 consecutive CBS domains span residues 394–450 (LSKP…NKKT) and 455–509 (MTRN…GGKK). Positions 395, 399, and 421 each coordinate S-methyl-5'-thioadenosine. S-adenosyl-L-methionine-binding positions include Asp439, Thr456, Ile460, and 479 to 482 (NISG). 497–500 (TSED) is an S-methyl-5'-thioadenosine binding site.

Belongs to the L-aspartate semialdehyde sulfurtransferase family. Homodimer. May form a complex with MJ0099.

The catalysed reaction is L-aspartate 4-semialdehyde + reduced 2[4Fe-4S]-[ferredoxin] + hydrogen sulfide + 3 H(+) = oxidized 2[4Fe-4S]-[ferredoxin] + L-homocysteine + H2O. Its pathway is amino-acid biosynthesis. Its activity is regulated as follows. The ligand-induced conformational reorganization of the protein could be an important regulatory mechanism. In terms of biological role, required for O-acetylhomoserine sulfhydrylase (OAHS)-independent homocysteine (Hcy) biosynthesis. Together with MJ0099, catalyzes the condensation of sulfide with aspartate semialdehyde to generate homocysteine. Likely functions through persulfide intermediate. In Methanocaldococcus jannaschii (strain ATCC 43067 / DSM 2661 / JAL-1 / JCM 10045 / NBRC 100440) (Methanococcus jannaschii), this protein is L-aspartate semialdehyde sulfurtransferase.